A 304-amino-acid polypeptide reads, in one-letter code: Trypsin-3 (304 aa).

Residues 81-301 enclose the Peptidase S1 domain; it reads IVGGYTCEEN…YVDWIKDTIA (221 aa). Intrachain disulfides connect Cys-87–Cys-217, Cys-105–Cys-121, Cys-196–Cys-263, Cys-228–Cys-242, and Cys-253–Cys-277. The Charge relay system role is filled by His-120. 5 residues coordinate Ca(2+): Glu-132, Asn-134, Val-137, Glu-139, and Glu-142. Asp-164 acts as the Charge relay system in catalysis. Sulfotyrosine is present on Tyr-211. Residue Ser-257 is the Charge relay system of the active site.

Belongs to the peptidase S1 family. Requires Ca(2+) as cofactor. In terms of tissue distribution, detected in pancreas and pancreatic fluid (at protein level). Expressed in pancreas and brain. Detected in ileum.

Its subcellular location is the secreted. The catalysed reaction is Preferential cleavage: Arg-|-Xaa, Lys-|-Xaa.. Not inhibited by Kunitz-type trypsin inhibitors. Its function is as follows. Digestive protease that cleaves proteins preferentially after an Arg residue and has proteolytic activity toward Kunitz-type trypsin inhibitors. This Homo sapiens (Human) protein is Trypsin-3 (PRSS3).